Reading from the N-terminus, the 461-residue chain is GTPase Der (461 aa).

EngA-type G domains are found at residues 2–164 (QKII…EDDV) and 197–368 (IRVG…KNFT). GTP is bound by residues 8–15 (GKPNVGKS), 55–59 (DSGGL), 116–119 (NKID), 203–210 (GRVNVGKS), 250–254 (DTAGI), and 314–317 (NKWD). Residues 369–453 (QKIQTSKLNE…PIVLAPKKRG (85 aa)) form the KH-like domain.

Belongs to the TRAFAC class TrmE-Era-EngA-EngB-Septin-like GTPase superfamily. EngA (Der) GTPase family. As to quaternary structure, associates with the 50S ribosomal subunit.

In terms of biological role, GTPase that plays an essential role in the late steps of ribosome biogenesis. This is GTPase Der from Campylobacter curvus (strain 525.92).